Consider the following 442-residue polypeptide: Endothelin receptor type B (442 aa).

The first 26 residues, 1-26 (MQPPPSLCGRALVALVLACGLSRIWG), serve as a signal peptide directing secretion. Topologically, residues 27 to 101 (EERGFPPDRA…GPIEIKETFK (75 aa)) are extracellular. The N-linked (GlcNAc...) asparagine glycan is linked to asparagine 59. The interval 69-88 (AEVPKGDRTAGSPPRTISPP) is disordered. Residues 102–126 (YINTVVSCLVFVLGIIGNSTLLRII) form a helical membrane-spanning segment. The Cytoplasmic portion of the chain corresponds to 127-137 (YKNKCMRNGPN). A helical membrane pass occupies residues 138-163 (ILIASLALGDLLHIVIDIPINVYKLL). The Extracellular segment spans residues 164–175 (AEDWPFGAEMCK). A disulfide bridge links cysteine 174 with cysteine 255. Residues 176–197 (LVPFIQKASVGITVLSLCALSI) form a helical membrane-spanning segment. Over 198–218 (DRYRAVASWSRIKGIGVPKWT) the chain is Cytoplasmic. Residues 219–243 (AVEIVLIWVVSVVLAVPEAIGFDII) traverse the membrane as a helical segment. Residues 244–271 (TMDYKGSYLRICLLHPVQKTAFMQFYKT) are Extracellular-facing. Residues 272-296 (AKDWWLFSFYFCLPLAITAFFYTLM) traverse the membrane as a helical segment. The Cytoplasmic portion of the chain corresponds to 297–324 (TCEMLRKKSGMQIALNDHLKQRREVAKT). The residue at position 305 (serine 305) is a Phosphoserine. The chain crosses the membrane as a helical span at residues 325 to 350 (VFCLVLVFALCWLPLHLSRILKLTLY). Topologically, residues 351–362 (NQNDPNRCELLS) are extracellular. A helical transmembrane segment spans residues 363–389 (FLLVLDYIGINMASLNSCINPIALYLV). At 390–442 (SKRFKNCFKSCLCCWCQSFEEKQSLEEKQSCLKFKANDHGYDNFRSSNKYSSS) the chain is on the cytoplasmic side. S-palmitoyl cysteine attachment occurs at residues cysteine 402, cysteine 403, and cysteine 405. At serine 419 the chain carries Phosphoserine. Residue tyrosine 439 is modified to Phosphotyrosine. Residues serine 440, serine 441, and serine 442 each carry the phosphoserine modification.

The protein belongs to the G-protein coupled receptor 1 family. Endothelin receptor subfamily. EDNRB sub-subfamily. Palmitoylation of Cys-402 was confirmed by the palmitoylation of Cys-402 in a deletion mutant lacking both Cys-403 and Cys-405. As to expression, expressed in placental stem villi vessels, but not in cultured placental villi smooth muscle cells.

It localises to the cell membrane. Its function is as follows. Non-specific receptor for endothelin 1, 2, and 3. Mediates its action by association with G proteins that activate a phosphatidylinositol-calcium second messenger system. The chain is Endothelin receptor type B from Homo sapiens (Human).